The chain runs to 397 residues: Argininosuccinate synthase (397 aa).

9 to 17 (AYSGGLDTS) provides a ligand contact to ATP. Tyrosine 87 provides a ligand contact to L-citrulline. Glycine 117 provides a ligand contact to ATP. Threonine 119, asparagine 123, and aspartate 124 together coordinate L-aspartate. Asparagine 123 contributes to the L-citrulline binding site. Arginine 127, serine 175, serine 184, glutamate 260, and tyrosine 272 together coordinate L-citrulline.

The protein belongs to the argininosuccinate synthase family. Type 1 subfamily. In terms of assembly, homotetramer.

It is found in the cytoplasm. It carries out the reaction L-citrulline + L-aspartate + ATP = 2-(N(omega)-L-arginino)succinate + AMP + diphosphate + H(+). It functions in the pathway amino-acid biosynthesis; L-arginine biosynthesis; L-arginine from L-ornithine and carbamoyl phosphate: step 2/3. The chain is Argininosuccinate synthase from Methanococcus maripaludis (strain DSM 14266 / JCM 13030 / NBRC 101832 / S2 / LL).